A 685-amino-acid polypeptide reads, in one-letter code: Nucleolar protein 4 (685 aa).

The tract at residues 1-21 (MEETIENVEVPSSNVSKQNDD) is disordered. An RRM 1 domain is found at 26 to 103 (KTLFVRSIPQ…HILRVDIAKR (78 aa)). Residues 106 to 123 (RSKKTSEVVEKSTPESSE) are compositionally biased toward basic and acidic residues. Residues 106–142 (RSKKTSEVVEKSTPESSEKITGQNNEDEDDADGEDSM) form a disordered region. Residues 130-140 (NEDEDDADGED) show a composition bias toward acidic residues. One can recognise an RRM 2 domain in the interval 147–225 (PKLIIRNMPW…RKVAVDFAVQ (79 aa)). The segment covering 231 to 242 (DYKKAQPEMNDK) has biased composition (basic and acidic residues). The tract at residues 231-285 (DYKKAQPEMNDKDDNESGNEDAEENHDDEEDENEEEDRQVDQASKNKESKRKAQN) is disordered. The span at 243–268 (DDNESGNEDAEENHDDEEDENEEEDR) shows a compositional bias: acidic residues. A Phosphoserine modification is found at Ser247. RRM domains follow at residues 290–383 (FSVF…PTLV) and 462–612 (TRLA…FAIE). Residue Thr379 is modified to Phosphothreonine. Residues 622 to 631 (EQLKQARTKR) show a composition bias toward basic residues. The disordered stretch occupies residues 622-685 (EQLKQARTKR…FKRKRKHAKK (64 aa)). The segment covering 645 to 672 (SENKKPKKEEATTPTNPDDKKMGDDIKR) has biased composition (basic and acidic residues). Over residues 674–685 (IGFKRKRKHAKK) the composition is skewed to basic residues.

In terms of assembly, interacts with NOP1.

The protein resides in the nucleus. The protein localises to the nucleolus. Functionally, required for 60S ribosomal subunit synthesis. Probably involved in the processing of 27S rRNA to produce mature 25S rRNA. The protein is Nucleolar protein 4 (NOP4) of Saccharomyces cerevisiae (strain ATCC 204508 / S288c) (Baker's yeast).